We begin with the raw amino-acid sequence, 456 residues long: tRNA-2-methylthio-N(6)-dimethylallyladenosine synthase (456 aa).

The 118-residue stretch at 6–123 folds into the MTTase N-terminal domain; that stretch reads KHVYIETYGC…LPNLIEEAQR (118 aa). The [4Fe-4S] cluster site is built by C15, C52, C86, C160, C164, and C167. The Radical SAM core domain maps to 146–380; the sequence is RAEGPTAYVS…RILEMAASIS (235 aa). The 64-residue stretch at 381 to 444 folds into the TRAM domain; the sequence is EAMVGTEQWV…KNSLRGRLIE (64 aa).

The protein belongs to the methylthiotransferase family. MiaB subfamily. Monomer. The cofactor is [4Fe-4S] cluster.

The protein localises to the cytoplasm. The catalysed reaction is N(6)-dimethylallyladenosine(37) in tRNA + (sulfur carrier)-SH + AH2 + 2 S-adenosyl-L-methionine = 2-methylsulfanyl-N(6)-dimethylallyladenosine(37) in tRNA + (sulfur carrier)-H + 5'-deoxyadenosine + L-methionine + A + S-adenosyl-L-homocysteine + 2 H(+). Functionally, catalyzes the methylthiolation of N6-(dimethylallyl)adenosine (i(6)A), leading to the formation of 2-methylthio-N6-(dimethylallyl)adenosine (ms(2)i(6)A) at position 37 in tRNAs that read codons beginning with uridine. The protein is tRNA-2-methylthio-N(6)-dimethylallyladenosine synthase of Dichelobacter nodosus (strain VCS1703A).